We begin with the raw amino-acid sequence, 118 residues long: Large ribosomal subunit protein uL24 (118 aa).

This sequence belongs to the universal ribosomal protein uL24 family. As to quaternary structure, part of the 50S ribosomal subunit.

One of two assembly initiator proteins, it binds directly to the 5'-end of the 23S rRNA, where it nucleates assembly of the 50S subunit. Its function is as follows. One of the proteins that surrounds the polypeptide exit tunnel on the outside of the subunit. This Synechococcus sp. (strain CC9605) protein is Large ribosomal subunit protein uL24.